A 2059-amino-acid polypeptide reads, in one-letter code: MGGQHFLLFGDQTVELIPSLQRLLRLSQSSPTAGVFLQNALDVIQRKTSTLSANERSNIGHFESFESILQKYSHTEDTIGVTHTVVICACRLAELIILVENDPSLLGASSKVTALGLCTGLLPAAALAGSRNISDLVSISVDTVAICFRLALELYRRTRHIEEVPGHWAYTILGIPAREMETLLEDFHRSKSTPSHRNVFIGVEEESWLTLFGPPPEFAQLFSYSAKIESAPKLKLAAYGAVHSPHLPVPDVEAIVGTSSILDRTITSRVQVLSTSTGEPYHPSTLRELFVQVSQEIVQKRLKMNIVLKSAAQRLSPTKPVQLTVVGLTNATPIVKRALDEQRLSVSVLNDPTGVSQPPGDTRAGSNSIAIVGMAGRFPGSEDLEGFWQSLLDGLDAHEEIPSDRFDIGTYFDSTGRAKNSLTTRYGCFLRNPGHFDHRLFNVSPREAEQMSPMQRLLLMSSYEALQMAGYSSNGSMSTQSQRVATYFGQAADDWKDGSRISGIDLYYIPGLQRGFTPGRLNFHYKWEGASYSVDSACASSASAIGLACSALLSRECDTALAGGVNSVTSPEPYSGLSKGSFLSPTGGCKTFQDAADGYCRGEAVGVVVLKRLEDAIHDNDNVLAVIRGHGRNHSAHASSITHPHAETQVRLYHDVLQKAGVQAQEIGFVEMHGTGTQAGDAVEMTSVLDVFGRDRTRHNPLVVGAVKANLGHTEAAAGAVSVIKSVMALQRRIIPPQPGVPFKVNHNYPDLKNLNVRIADAQIEFHKPTGGNGKRKVMVNNFDAAGGNSCLILEEAPEHAKKSQDPRAHHTVVLSARTSASLKNNKERLLEYLIAHPGTELADLAYSTTARRIHEELRSAYSGNSIESIRQQIRDDVSKQTATQGPSQKRSVAWVFSGQGSQYPGMGSELFHSNATFRASIRSMQSISHTQGFPSFIELISDKDVDLSEKTAVQVQLAVVAVEIALAYLWRSWGVNPDVVIGHSLGEYAALCVSGVLSVTDVLYLVGQRALLTEDKLTANSYAMLATVAPAQAVEEYIRRPEFESCCISCYNSPTATVISGPVSELQALESSLRSAGTVCTLVRVPYGFHSPQMDPILDGFERRARSVQFQAPRTPIASTVTASITRDSGQFTSNYLARQAREPVHFYKALAACKADGVVDQNTIWLEIGPDSVCGSMVKATLGATNVYSSLRSREANWKTISSTVAALYTSRSSISWPDFHQEYTSSLRLLDLPTYAFDTKNFWRVYEETVPVEQVTLHKAEPRKPISSSLHFVKKETVTKDEAAVIFETLLSDENLYEAIRGHLVDELPLCPSGIYCDMALTAAKYVFGKMNPKQNTVSNMAITGLTINHPVVVASKDSKQILQTSVEKNPRTGDKVTITFHLHDGSFTQEIGFCQVHTFSASEWTDEWSNASFFVKSRMEGLVQSVKAGRGDHLRRPVVYKLFAHLVDYDEKYQAIEELFWDEHSNDAVANITLKPYNGRGEFECLPYWTDPLVHLAGFVLNVNLTGSDNSVYLSGGVKRMQVYGQLSAEKKYTSYVRTHPADDHGTTLSDVYVFGQEGIVGFCSLVFQRMPRMVLHHLLHRKEAKAPVKAAPERTMTVPKSEKVHVSSQLPDAPPKHDLADQLITIVAEETGVDLVDMTPTADFASMGVDSLMSITIIDRVQKEIGVQLEASFFQENLTVSDARRALGGDETASESENDAEGDAPSDGGSPSGSWTPISPPESDVEELIVTPTKIVIEAAAKLSAPPPAEVVEVVVEPEPIVKVLPPTPTPPAVEYKSNVVLIHGRKKSNKTPLFLITDGAGSATAYLHLPRFPTGMPLYAVESPFVRCPLEYNFSVEETAEMYIAAIKKIQPEGPYNLGGWSAGGAHAFEVSRRLLESGEKVQRLIIIDMKIPKPMPEGLEVTMDFLDKVGLTTGINRAGPALAGMSERLKQHLASTIKALMVYTARPMDPARRPEKTYLIWAEYGLAEIIGDAAFKDVASMMGLKEDVEGNPMEDDTGLGSWFYSRRDNFGPNGWDKLLGPVECRTVKADHFSMVTPPAANDLGKLLQEAVA.

The region spanning L7–H243 is the Starter acyltransferase (SAT) domain. The Ketosynthase family 3 (KS3) domain occupies S366–E796. Catalysis depends on for beta-ketoacyl synthase activity residues C538, H673, and H713. The Malonyl-CoA:ACP transacylase (MAT) domain occupies W895–G1185. The N-terminal hotdog fold stretch occupies residues L1273–S1413. Residues L1273 to H1581 form the PKS/mFAS DH domain. Residue H1306 is the Proton acceptor; for dehydratase activity of the active site. The segment at G1435–H1581 is C-terminal hotdog fold. Catalysis depends on D1495, which acts as the Proton donor; for dehydratase activity. The region spanning P1619 to E1696 is the Carrier domain. At S1656 the chain carries O-(pantetheine 4'-phosphoryl)serine. Residues G1693–E1727 form a disordered region. Positions T1697 to A1709 are enriched in acidic residues. A compositionally biased stretch (low complexity) spans P1710–S1719. The tract at residues A1778 to A2059 is thioesterase (TE) domain.

It depends on pantetheine 4'-phosphate as a cofactor.

It participates in mycotoxin biosynthesis. Its function is as follows. Non-reducing polyketide synthase; part of the gene cluster that mediates the biosynthesis of stromemycin, a depside C-glucoside with two unsaturated C9 side chains belonging to aromatic polyketide glycosides. The HR-PKS stmA and the NR-PKS stmB act as scaffold-generating enzymes responsible for the biosynthesis of the polyketide skeleton bininalkenylresorcylic acid. StmA condenses on acetyl-CoA starter unit with 4 malonyl-CoA units and the stmB uses 3 more malonyl-CoA units and catalyzes the depside bond formation. The glycoytransferase stmC then acts as the tailoring enzyme responsible for 3-C-glucosylation of bininalkenylresorcylic acid to yield stromemycin. This is Non-reducing polyketide synthase stmB from Aspergillus ustus.